We begin with the raw amino-acid sequence, 810 residues long: DNA-binding protein REB1 (810 aa).

Basic and acidic residues-rich tracts occupy residues 1 to 10 and 29 to 44; these read MPSGHNDKNA and HQNHDPQLHTKDLENK. Disordered regions lie at residues 1-80, 114-161, 180-243, 294-313, and 346-365; these read MPSG…ENIS, NQQD…GVDD, NNNN…TNND, HGLNHQNKNHNDDTDDLSNS, and QDTQPHQQKSPSHDNEAGSV. Low complexity-rich tracts occupy residues 51 to 64 and 124 to 135; these read IVESSSDVDVNNND and NNNTDNGNDSNN. A compositionally biased stretch (basic and acidic residues) spans 149-161; that stretch reads DKNKKDAGVGVDD. The span at 180 to 191 shows a compositional bias: low complexity; that stretch reads NNNNNNSIANDS. Basic and acidic residues predominate over residues 198–208; that stretch reads HDNGNNHENSQ. A compositionally biased stretch (polar residues) spans 346 to 355; the sequence is QDTQPHQQKS. Residue serine 355 is modified to Phosphoserine. The region spanning 470-523 is the HTH myb-type domain; the sequence is HIFEQRGKWTAEEEQELAKLCAEKEGQWAEIGKTLGRMPEDCRDRWRNYVKCGT. The H-T-H motif DNA-binding region spans 497 to 519; the sequence is WAEIGKTLGRMPEDCRDRWRNYV. The segment at 572–667 is disordered; sequence QNDHRNNDED…STHSKSLSNT (96 aa). Residues 586–606 are compositionally biased toward low complexity; sequence ASAAAAAAAAIQEQQQLLQQK. A compositionally biased stretch (basic and acidic residues) spans 627–636; the sequence is DNKDEDKPHD. Residues 643 to 667 show a composition bias toward polar residues; sequence DDNSQNSMVPAPSATSTHSKSLSNT. Residues 692–717 enclose the Myb-like domain; sequence NWTIVSERMGGTRSRIQCRYKWNKLV. Lysine 807 participates in a covalent cross-link: Glycyl lysine isopeptide (Lys-Gly) (interchain with G-Cter in SUMO).

It localises to the nucleus. DNA-binding protein that recognizes sites within both the enhancer and the promoter of rRNA transcription, as well as upstream of many genes transcribed by RNA polymerase II. It is essential for cell growth. May stimulate or inhibit transcription. Specifically recognizes the sequence 5'-CCGGGTA-3' or 5'-CGGGTRR-3' (where R is any purine). A member of the general regulatory factors (GRFs) which act as genome partitioners. Acts as a chromatin insulator which are known as STARs (Subtelomeric anti-silencing region). STARs prevent negative or positive transcription influence by extending across chromatin to a promoter. In Saccharomyces cerevisiae (strain ATCC 204508 / S288c) (Baker's yeast), this protein is DNA-binding protein REB1 (REB1).